The sequence spans 326 residues: tRNA N6-adenosine threonylcarbamoyltransferase (326 aa).

The Fe cation site is built by His-113 and His-117. Substrate contacts are provided by residues 134 to 138 (VASGG), Asp-167, Gly-180, and Asn-267. A Fe cation-binding site is contributed by Asp-291.

This sequence belongs to the KAE1 / TsaD family. Requires Fe(2+) as cofactor.

It localises to the cytoplasm. It catalyses the reaction L-threonylcarbamoyladenylate + adenosine(37) in tRNA = N(6)-L-threonylcarbamoyladenosine(37) in tRNA + AMP + H(+). In terms of biological role, required for the formation of a threonylcarbamoyl group on adenosine at position 37 (t(6)A37) in tRNAs that read codons beginning with adenine. Is involved in the transfer of the threonylcarbamoyl moiety of threonylcarbamoyl-AMP (TC-AMP) to the N6 group of A37, together with TsaE and TsaB. TsaD likely plays a direct catalytic role in this reaction. In Thermus thermophilus (strain ATCC 27634 / DSM 579 / HB8), this protein is tRNA N6-adenosine threonylcarbamoyltransferase.